A 605-amino-acid chain; its full sequence is MCGIVGVTGKDSAVSILLNGLEKLEYRGYDSAGIYVNDQDGHDYLVKEKGRIDDLRKEVGEAVHGSTGIGHTRWATHGEPSVANAHPQVSADGRFYLVHNGVIENFEDLKQTYLSDVTFKSQTDTEVIVQLVDRFVTKEGLSTLAAFRKTLGLLGHSSYGFLLMDKEDPDTLYVAKNKSPLLIGVGEGFNVVCSDSLAMLDQTKDFLELHDGEIVVVKPDEIKITNQAGEPVERKPFHVDIDAAQADKGTYPFYMLKEIDEQPNVMRKLSQVYLNDAGDPIINDDLLTALKAADRLYIVAAGTSYHAGLVGAKLFESLANVPTEVHVSSEFAYNQPLLSAHPFFIFLTQSGETADSREVLLNVNDQHFPSLTITNVPNSTLSREATYTLLLHAGPEIAVASTKAYTAQIALQAILAKALGVAVDQPAATAFDVKQQLALVANGMQSLVDEKATFEKIAKSALLNTPNAFYIGRGLDYAVSLETALKLKEISYVQAEGFASGELKHGTIALIEKDTPVIGIITQKNTAGLTRSNLQEVAARGAKTVTIVTDSLAKDGDTVILPTVDERLTALLSVVPGQLLAYYTSLNKGLDVDKPRNLAKSVTVE.

The active-site Nucleophile; for GATase activity is the C2. Residues C2–D220 form the Glutamine amidotransferase type-2 domain. 2 SIS domains span residues L286–P426 and A458–P595. Catalysis depends on K600, which acts as the For Fru-6P isomerization activity.

In terms of assembly, homodimer.

The protein resides in the cytoplasm. It catalyses the reaction D-fructose 6-phosphate + L-glutamine = D-glucosamine 6-phosphate + L-glutamate. In terms of biological role, catalyzes the first step in hexosamine metabolism, converting fructose-6P into glucosamine-6P using glutamine as a nitrogen source. The chain is Glutamine--fructose-6-phosphate aminotransferase [isomerizing] from Lactiplantibacillus plantarum (strain ATCC BAA-793 / NCIMB 8826 / WCFS1) (Lactobacillus plantarum).